A 466-amino-acid chain; its full sequence is Cytochrome P450 85A (466 aa).

A helical transmembrane segment spans residues 2 to 22 (ALFMAILGVLVLLLCLCSALL). Residue C414 participates in heme binding.

This sequence belongs to the cytochrome P450 family. It depends on heme as a cofactor.

It is found in the membrane. In terms of biological role, catalyzes the C6-oxidation step in brassinosteroids biosynthesis. The sequence is that of Cytochrome P450 85A from Phaseolus vulgaris (Kidney bean).